Consider the following 298-residue polypeptide: ATP phosphoribosyltransferase (298 aa).

This sequence belongs to the ATP phosphoribosyltransferase family. Long subfamily. The cofactor is Mg(2+).

It localises to the cytoplasm. The enzyme catalyses 1-(5-phospho-beta-D-ribosyl)-ATP + diphosphate = 5-phospho-alpha-D-ribose 1-diphosphate + ATP. It functions in the pathway amino-acid biosynthesis; L-histidine biosynthesis; L-histidine from 5-phospho-alpha-D-ribose 1-diphosphate: step 1/9. With respect to regulation, feedback inhibited by histidine. Functionally, catalyzes the condensation of ATP and 5-phosphoribose 1-diphosphate to form N'-(5'-phosphoribosyl)-ATP (PR-ATP). Has a crucial role in the pathway because the rate of histidine biosynthesis seems to be controlled primarily by regulation of HisG enzymatic activity. This Aeromonas hydrophila subsp. hydrophila (strain ATCC 7966 / DSM 30187 / BCRC 13018 / CCUG 14551 / JCM 1027 / KCTC 2358 / NCIMB 9240 / NCTC 8049) protein is ATP phosphoribosyltransferase.